A 477-amino-acid polypeptide reads, in one-letter code: Glutamate--tRNA ligase (477 aa).

The 'HIGH' region signature appears at 8–18; it reads PSPTGTLHIGT. A 'KMSKS' region motif is present at residues 247–251; it reads KLSKR. K250 is an ATP binding site.

Belongs to the class-I aminoacyl-tRNA synthetase family. Glutamate--tRNA ligase type 1 subfamily. In terms of assembly, monomer.

The protein localises to the cytoplasm. It catalyses the reaction tRNA(Glu) + L-glutamate + ATP = L-glutamyl-tRNA(Glu) + AMP + diphosphate. Catalyzes the attachment of glutamate to tRNA(Glu) in a two-step reaction: glutamate is first activated by ATP to form Glu-AMP and then transferred to the acceptor end of tRNA(Glu). This Synechococcus sp. (strain CC9902) protein is Glutamate--tRNA ligase.